A 784-amino-acid polypeptide reads, in one-letter code: Replication protein A 70 kDa DNA-binding subunit E (784 aa).

The tract at residues 114–224 (HPVPGGKHND…NRGPVARNEA (111 aa)) is disordered. Polar residues-rich tracts occupy residues 132-148 (KFNT…QVNN) and 167-190 (SSVP…NGVT). The OB DNA-binding region spans 241–327 (WTIKARVTNK…RNDYEIMLDN (87 aa)). A C4-type zinc finger spans residues 532–558 (CPIMNGDRPCSKKVTDNGDGTWRCEKC). Disordered regions lie at residues 678-707 (LPIN…PSSV) and 746-784 (AKCP…VGSY). Residues 695 to 707 (GIGSSGTRDPSSV) show a composition bias toward polar residues. Residues 760 to 776 (YMGGSYRGTTGSYGGGL) are compositionally biased toward gly residues.

This sequence belongs to the replication factor A protein 1 family. As to quaternary structure, heterotrimer of RPA1, RPA2 and RPA3 (canonical replication protein A complex).

It is found in the nucleus. Its function is as follows. Component of the replication protein A complex (RPA) required for DNA recombination, repair and replication. The activity of RPA is mediated by single-stranded DNA binding and protein interactions. Probably involved in repair of double-strand DNA breaks (DSBs) induced by genotoxic stresses. The protein is Replication protein A 70 kDa DNA-binding subunit E (RPA1E) of Arabidopsis thaliana (Mouse-ear cress).